The sequence spans 312 residues: DNA-directed RNA polymerase subunit alpha (312 aa).

The segment at Met1 to Ser226 is alpha N-terminal domain (alpha-NTD). The alpha C-terminal domain (alpha-CTD) stretch occupies residues Thr243–Lys312.

The protein belongs to the RNA polymerase alpha chain family. Homodimer. The RNAP catalytic core consists of 2 alpha, 1 beta, 1 beta' and 1 omega subunit. When a sigma factor is associated with the core the holoenzyme is formed, which can initiate transcription.

The catalysed reaction is RNA(n) + a ribonucleoside 5'-triphosphate = RNA(n+1) + diphosphate. DNA-dependent RNA polymerase catalyzes the transcription of DNA into RNA using the four ribonucleoside triphosphates as substrates. The protein is DNA-directed RNA polymerase subunit alpha of Lactococcus lactis subsp. cremoris (strain SK11).